A 311-amino-acid chain; its full sequence is Mediator of RNA polymerase II transcription subunit 27 (311 aa).

Phosphoserine is present on S132. K134 carries the post-translational modification N6-methyllysine.

This sequence belongs to the Mediator complex subunit 27 family. In terms of assembly, component of the Mediator complex, which is composed of MED1, MED4, MED6, MED7, MED8, MED9, MED10, MED11, MED12, MED13, MED13L, MED14, MED15, MED16, MED17, MED18, MED19, MED20, MED21, MED22, MED23, MED24, MED25, MED26, MED27, MED29, MED30, MED31, CCNC, CDK8 and CDC2L6/CDK11. The MED12, MED13, CCNC and CDK8 subunits form a distinct module termed the CDK8 module. Mediator containing the CDK8 module is less active than Mediator lacking this module in supporting transcriptional activation. Individual preparations of the Mediator complex lacking one or more distinct subunits have been variously termed ARC, CRSP, DRIP, PC2, SMCC and TRAP.

Its subcellular location is the nucleus. Component of the Mediator complex, a coactivator involved in the regulated transcription of nearly all RNA polymerase II-dependent genes. Mediator functions as a bridge to convey information from gene-specific regulatory proteins to the basal RNA polymerase II transcription machinery. Mediator is recruited to promoters by direct interactions with regulatory proteins and serves as a scaffold for the assembly of a functional preinitiation complex with RNA polymerase II and the general transcription factors. This Homo sapiens (Human) protein is Mediator of RNA polymerase II transcription subunit 27 (MED27).